The chain runs to 167 residues: Small ribosomal subunit protein uS5 (167 aa).

The region spanning 12–75 is the S5 DRBM domain; it reads LQEKLITVNR…EKARRNMVTI (64 aa).

It belongs to the universal ribosomal protein uS5 family. As to quaternary structure, part of the 30S ribosomal subunit. Contacts proteins S4 and S8.

Functionally, with S4 and S12 plays an important role in translational accuracy. Located at the back of the 30S subunit body where it stabilizes the conformation of the head with respect to the body. This is Small ribosomal subunit protein uS5 from Buchnera aphidicola subsp. Schizaphis graminum (strain Sg).